We begin with the raw amino-acid sequence, 573 residues long: DNA ligase (573 aa).

E250 is a binding site for ATP. The active-site N6-AMP-lysine intermediate is K252. ATP-binding residues include R257, R272, E301, F342, R432, and K438.

Belongs to the ATP-dependent DNA ligase family. Mg(2+) is required as a cofactor.

The enzyme catalyses ATP + (deoxyribonucleotide)n-3'-hydroxyl + 5'-phospho-(deoxyribonucleotide)m = (deoxyribonucleotide)n+m + AMP + diphosphate.. Its function is as follows. DNA ligase that seals nicks in double-stranded DNA during DNA replication, DNA recombination and DNA repair. In Methanococcus maripaludis (strain C5 / ATCC BAA-1333), this protein is DNA ligase.